A 1405-amino-acid polypeptide reads, in one-letter code: MKLKRTAYLLFLYLSSSLLICIKNSFCNKNNTRCLSGPCQNNSTCKHFPQDNNCCLDTANNLDKDCEDLKDPCFSSPCQGIATCVKIPGEGNFLCQCPPGYSGLNCETATNSCGGNLCQHGGTCRKDPEHPVCICPPGYAGRFCETDHNECASSPCHNGAMCQDGINGYSCFCVPGYQGRHCDLEVDECVSDPCKNEAVCLNEIGRYTCVCPQEFSGVNCELEIDECRSQPCLHGATCQDAPGGYSCDCAPGFLGEHCELSVNECESQPCLHGGLCVDGRNSYHCDCTGSGFTGMHCESLIPLCWSKPCHNDATCEDTVDSYICHCRPGYTGALCETDINECSSNPCQFWGECVELSSEGLYGNTAGLPSSFSYVGASGYVCICQPGFTGIHCEEDVDECLLHPCLNGGTCENLPGNYACHCPFDDTSRTFYGGENCSEILLGCTHHQCLNNGKCIPHFQNGQHGFTCQCLSGYAGPLCETVTTLSFGSNGFLWVTSGSHTGIGPECNISLRFHTVQPNALLLIRGNKDVSMKLELLNGCVHLSIEVWNQLKVLLSISHNTSDGEWHFVEVTIAETLTLALVGGSCKEKCTTKSSVPVENHQSICALQDSFLGGLPMGTANNSVSVLNIYNVPSTPSFVGCLQDIRFDLNHITLENVSSGLSSNVKAGCLGKDWCESQPCQNRGRCINLWQGYQCECDRPYTGSNCLKEYVAGRFGQDDSTGYAAFSVNDNYGQNFSLSMFVRTRQPLGLLLALENSTYQYVSVWLEHGSLALQTPGSPKFMVNFFLSDGNVHLISLRIKPNEIELYQSSQNLGFISVPTWTIRRGDVIFIGGLPDREKTEVYGGFFKGCVQDVRLNSQTLEFFPNSTNNAYDDPILVNVTQGCPGDNTCKSNPCHNGGVCHSLWDDFSCSCPTNTAGRACEQVQWCQLSPCPPTAECQLLPQGFECIANAVFSGLSREILFRSNGNITRELTNITFAFRTHDTNVMILHAEKEPEFLNISIQDARLFFQLRSGNSFYTLHLMGSQLVNDGTWHQVTFSMIDPVAQTSRWQMEVNDQTPFVISEVATGSLNFLKDNTDIYVGDQSVDNPKGLQGCLSTIEIGGIYLSYFENLHGFPGKPQEEQFLKVSTNMVLTGCLPSNACHSSPCLHGGNCEDSYSSYRCACLSGWSGTHCEINIDECFSSPCIHGNCSDGVAAYHCRCEPGYTGVNCEVDVDNCKSHQCANGATCVPEAHGYSCLCFGNFTGRFCRHSRLPSTVCGNEKRNFTCYNGGSCSMFQEDWQCMCWPGFTGEWCEEDINECASDPCINGGLCRDLVNRFLCICDVAFAGERCELDLADDRLLGIFTAVGSGTLALFFILLLAGVASLIASNKRATQGTYSPSGQEKAGPRVEMWIRMPPPALERLI.

A signal peptide spans 1 to 27 (MKLKRTAYLLFLYLSSSLLICIKNSFC). Residues 28 to 1339 (NKNNTRCLSG…RCELDLADDR (1312 aa)) are Extracellular-facing. The EGF-like 1; atypical domain occupies 30 to 67 (NNTRCLSGPCQNNSTCKHFPQDNNCCLDTANNLDKDCE). 33 cysteine pairs are disulfide-bonded: C34–C45, C39–C54, C55–C66, C73–C84, C78–C95, C97–C106, C113–C124, C118–C133, C135–C144, C151–C162, C156–C171, C173–C182, C189–C200, C194–C209, C211–C220, C227–C238, C232–C247, C249–C258, C265–C276, C270–C285, C287–C297, C304–C315, C309–C324, C326–C335, C342–C353, C347–C382, C384–C393, C400–C411, C405–C420, C422–C437, C444–C455, C449–C468, and C470–C479. N-linked (GlcNAc...) asparagine glycosylation occurs at N41. EGF-like domains follow at residues 69-107 (LKDP…LNCE) and 109-145 (ATNS…RFCE). An EGF-like 4; calcium-binding domain is found at 147-183 (DHNECASSPCHNGAMCQDGINGYSCFCVPGYQGRHCD). Residues 185-221 (EVDECVSDPCKNEAVCLNEIGRYTCVCPQEFSGVNCE) enclose the EGF-like 5; calcium-binding domain. An EGF-like 6; calcium-binding domain is found at 223 to 259 (EIDECRSQPCLHGATCQDAPGGYSCDCAPGFLGEHCE). EGF-like domains are found at residues 261–298 (SVNE…MHCE), 300–336 (LIPL…ALCE), 338–394 (DINE…IHCE), 396–438 (DVDE…ENCS), and 440–480 (ILLG…PLCE). Positions 482-669 (VTTLSFGSNG…GLSSNVKAGC (188 aa)) constitute a Laminin G-like 1 domain. Residues N560 and N656 are each glycosylated (N-linked (GlcNAc...) asparagine). Intrachain disulfides connect C641/C669, C675/C686, C680/C695, and C697/C706. Residues 671-707 (GKDWCESQPCQNRGRCINLWQGYQCECDRPYTGSNCL) form the EGF-like 12 domain. The Laminin G-like 2 domain maps to 713-884 (GRFGQDDSTG…PILVNVTQGC (172 aa)). N-linked (GlcNAc...) asparagine glycans are attached at residues N756 and N879. 6 cysteine pairs are disulfide-bonded: C850/C884, C890/C901, C895/C910, C912/C921, C927/C938, and C932/C947. 2 EGF-like domains span residues 886-922 (GDNT…RACE) and 923-959 (QVQW…LSRE). The 187-residue stretch at 950–1136 (NAVFSGLSRE…VSTNMVLTGC (187 aa)) folds into the Laminin G-like 3 domain. N967, N974, and N999 each carry an N-linked (GlcNAc...) asparagine glycan. 16 disulfide bridges follow: C1095–C1136, C1142–C1153, C1147–C1162, C1164–C1173, C1180–C1190, C1185–C1199, C1201–C1210, C1217–C1228, C1222–C1237, C1239–C1248, C1258–C1273, C1267–C1282, C1284–C1293, C1300–C1311, C1305–C1320, and C1322–C1331. The region spanning 1138–1174 (PSNACHSSPCLHGGNCEDSYSSYRCACLSGWSGTHCE) is the EGF-like 15 domain. The EGF-like 16; calcium-binding domain occupies 1176 to 1211 (NIDECFSSPCIHGNCSDGVAAYHCRCEPGYTGVNCE). N1189 carries N-linked (GlcNAc...) asparagine glycosylation. 2 EGF-like domains span residues 1213–1249 (DVDN…RFCR) and 1254–1294 (PSTV…EWCE). N-linked (GlcNAc...) asparagine glycans are attached at residues N1242 and N1264. Residues 1296 to 1332 (DINECASDPCINGGLCRDLVNRFLCICDVAFAGERCE) enclose the EGF-like 19; calcium-binding domain. The helical transmembrane segment at 1340–1360 (LLGIFTAVGSGTLALFFILLL) threads the bilayer. At 1361 to 1405 (AGVASLIASNKRATQGTYSPSGQEKAGPRVEMWIRMPPPALERLI) the chain is on the cytoplasmic side.

The protein belongs to the Crumbs protein family. In terms of assembly, component of a complex composed of PALS1, CRB1 and EPB41L5. Within the complex, interacts (via intracellular domain) with PALS1 and EPB41L5 (via FERM domain). Forms a complex with MPP4 and PALS1. Interacts with MPDZ/MUPP1 and MPP4. Post-translationally, glycosylated. As to expression, expressed in the kidney, lung, stomach and testis. Expressed in the brain. Expressed in the retina of the eye. Expressed in the outer nuclear layer, photoreceptor layer and inner nuclear layer of the retina. Expressed in Mueller cell radial processes in the inner nuclear layer, in apical processes sclerad to the external limiting membrane, and in the subapical region, adjacent to the adherens junction of retinal photoreceptors. In the brain, expressed in the granular layer of the cerebellum, the hippocampal dentate gyrus, the olfactory bulbs, the subventricular region lining the telencephalic ventricles and the rostral migratory stream. Ubiquitously expressed.

It is found in the apical cell membrane. Its subcellular location is the secreted. The protein localises to the cell projection. The protein resides in the cilium. It localises to the photoreceptor outer segment. It is found in the photoreceptor inner segment. Its subcellular location is the cytoplasm. The protein localises to the cell junction. The protein resides in the focal adhesion. Plays a role in photoreceptor morphogenesis in the retina. May maintain cell polarization and adhesion. In terms of biological role, may play a role in epidermal tissue morphogenesis. May function in cell attachment for stratified epithelial organization. The sequence is that of Protein crumbs homolog 1 (Crb1) from Mus musculus (Mouse).